A 283-amino-acid chain; its full sequence is Transcription factor bHLH104 (283 aa).

A disordered region spans residues 96–134; it reads VEINSGSSGGAVKEEQEHLDDDCSRKRARTGSCSRGGGT. A compositionally biased stretch (basic and acidic residues) spans 107–120; it reads VKEEQEHLDDDCSR. One can recognise a bHLH domain in the interval 130-181; that stretch reads RGGGTKACRERLRREKLNERFMDLSSVLEPGRTPKTDKPAILDDAIRILNQL.

Homodimer. Interacts with BTS and BHLH47/PYE.

It localises to the nucleus. This chain is Transcription factor bHLH104 (BHLH104), found in Arabidopsis thaliana (Mouse-ear cress).